A 716-amino-acid polypeptide reads, in one-letter code: Translation initiation factor IF-2 (716 aa).

The tract at residues Tyr-50–Lys-136 is disordered. Polar residues predominate over residues Pro-62–Asn-84. Residues Lys-101–Arg-113 show a composition bias toward basic residues. Residues Asn-114–Pro-126 show a composition bias toward low complexity. Positions Ile-217–Lys-386 constitute a tr-type G domain. Positions Gly-226–Thr-233 are G1. Gly-226–Thr-233 contacts GTP. Positions Gly-251–His-255 are G2. The interval Asp-272–Gly-275 is G3. GTP-binding positions include Asp-272–His-276 and Asn-326–Asp-329. The segment at Asn-326–Asp-329 is G4. Positions Ser-362–Leu-364 are G5.

The protein belongs to the TRAFAC class translation factor GTPase superfamily. Classic translation factor GTPase family. IF-2 subfamily.

Its subcellular location is the cytoplasm. Functionally, one of the essential components for the initiation of protein synthesis. Protects formylmethionyl-tRNA from spontaneous hydrolysis and promotes its binding to the 30S ribosomal subunits. Also involved in the hydrolysis of GTP during the formation of the 70S ribosomal complex. This chain is Translation initiation factor IF-2 (infB), found in Bacillus subtilis (strain 168).